The chain runs to 535 residues: MALQAAYEYLQQAVGHGAWSSTQTLTLLLIAVPTVLLLLASLAKSTSSSGRGKPPLPPSPPGTLPIVGHLHHIGPQTHISLQELVAKYGHNGFLFLRAGAVPTLIVSSPSAAEAVMRTHDHICASRPWSMASHILRYNTCDVAFSPLGEYWQQTRKLMNTHLLSNKKVYSFRHGREEEVCLVVDNLREAAAKSPSTAVDMSEVLAAYTNDVVSRSVLGSTHRKKGRNTLFREMTMTNVDLLVGFNLEYYIPRWPLTDLLFRLVCWKVTRHLKRWDALLEEVIHEHVEMRKLSGDKEKESDDFIDIFLSRYEEYGFTMDNVKSLLMNVFEAAIETSYLVLESAMAELMNHRRVMKKLQAEVRAYGAEKKLDMIREDDLSSLPYLKASMKEALRLHPPGPLLLPHYSTADCQIDGYHIPANPRVLVNGWAIGRDPAVWEKPEEFMPERFMRDGWDKSNSYSGQDFRYLPFGSGRRICPGANFGLATMEIMLANLMYHFDWEVPNEKEDGCWKVSMDEKFGLMLRRNELLYLVPRASS.

A helical membrane pass occupies residues 23-43; that stretch reads QTLTLLLIAVPTVLLLLASLA. Cys475 is a heme binding site.

It belongs to the cytochrome P450 family. Requires heme as cofactor.

It is found in the membrane. Its pathway is secondary metabolite biosynthesis; 2,4-dihydroxy-1,4-benzoxazin-3-one biosynthesis; 2,4-dihydroxy-1,4-benzoxazin-3-one from indoleglycerol phosphate: step 5/5. Functionally, catalyzes the conversion of 2-hydroxy-1,4-benzoxazin-3-one (HBOA) to 2,4-dihydroxy-1,4-benzoxazin-3-one (DIBOA). The protein is Cytochrome P450 71C3 (CYP71C3) of Zea mays (Maize).